Reading from the N-terminus, the 506-residue chain is Nucleoside import ATP-binding protein NupA (506 aa).

ABC transporter domains lie at 7 to 242 (IQMI…VGRS) and 259 to 503 (LEIK…VGGN). 39-46 (GENGAGKS) is an ATP binding site.

The protein belongs to the ABC transporter superfamily. The complex is composed of two ATP-binding proteins (NupA), two transmembrane proteins (NupB and NupC) and a solute-binding protein (BmpA).

It localises to the cell membrane. Part of an ABC transporter complex involved in the uptake of all common nucleosides. Responsible for energy coupling to the transport system. The protein is Nucleoside import ATP-binding protein NupA of Lactococcus lactis subsp. cremoris (strain MG1363).